Here is a 446-residue protein sequence, read N- to C-terminus: Probable D-serine dehydratase (446 aa).

Lys113 is subject to N6-(pyridoxal phosphate)lysine.

This sequence belongs to the serine/threonine dehydratase family. DsdA subfamily. It depends on pyridoxal 5'-phosphate as a cofactor.

It catalyses the reaction D-serine = pyruvate + NH4(+). The sequence is that of Probable D-serine dehydratase from Burkholderia lata (strain ATCC 17760 / DSM 23089 / LMG 22485 / NCIMB 9086 / R18194 / 383).